A 106-amino-acid polypeptide reads, in one-letter code: Large ribosomal subunit protein bL21 (106 aa).

The protein belongs to the bacterial ribosomal protein bL21 family. In terms of assembly, part of the 50S ribosomal subunit. Contacts protein L20.

Functionally, this protein binds to 23S rRNA in the presence of protein L20. The protein is Large ribosomal subunit protein bL21 of Fervidobacterium nodosum (strain ATCC 35602 / DSM 5306 / Rt17-B1).